The following is a 362-amino-acid chain: 3-dehydroquinate synthase (362 aa).

Residues 72–77 (SGEEAK), 106–110 (GVTGD), 130–131 (TT), lysine 142, and lysine 151 each bind NAD(+). Zn(2+) contacts are provided by glutamate 184, histidine 246, and histidine 263.

The protein belongs to the sugar phosphate cyclases superfamily. Dehydroquinate synthase family. It depends on Co(2+) as a cofactor. Requires Zn(2+) as cofactor. NAD(+) is required as a cofactor.

The protein resides in the cytoplasm. It carries out the reaction 7-phospho-2-dehydro-3-deoxy-D-arabino-heptonate = 3-dehydroquinate + phosphate. It participates in metabolic intermediate biosynthesis; chorismate biosynthesis; chorismate from D-erythrose 4-phosphate and phosphoenolpyruvate: step 2/7. Functionally, catalyzes the conversion of 3-deoxy-D-arabino-heptulosonate 7-phosphate (DAHP) to dehydroquinate (DHQ). This chain is 3-dehydroquinate synthase, found in Bacillus velezensis (strain DSM 23117 / BGSC 10A6 / LMG 26770 / FZB42) (Bacillus amyloliquefaciens subsp. plantarum).